The sequence spans 338 residues: Ferrochelatase (338 aa).

Fe cation contacts are provided by His189 and Glu294.

Belongs to the ferrochelatase family.

Its subcellular location is the cytoplasm. The catalysed reaction is heme b + 2 H(+) = protoporphyrin IX + Fe(2+). It functions in the pathway porphyrin-containing compound metabolism; protoheme biosynthesis; protoheme from protoporphyrin-IX: step 1/1. In terms of biological role, catalyzes the ferrous insertion into protoporphyrin IX. This chain is Ferrochelatase, found in Pseudomonas putida (strain ATCC 47054 / DSM 6125 / CFBP 8728 / NCIMB 11950 / KT2440).